A 177-amino-acid chain; its full sequence is Peptide methionine sulfoxide reductase MsrA (177 aa).

Cys-15 is an active-site residue.

This sequence belongs to the MsrA Met sulfoxide reductase family.

The enzyme catalyses L-methionyl-[protein] + [thioredoxin]-disulfide + H2O = L-methionyl-(S)-S-oxide-[protein] + [thioredoxin]-dithiol. It carries out the reaction [thioredoxin]-disulfide + L-methionine + H2O = L-methionine (S)-S-oxide + [thioredoxin]-dithiol. Functionally, has an important function as a repair enzyme for proteins that have been inactivated by oxidation. Catalyzes the reversible oxidation-reduction of methionine sulfoxide in proteins to methionine. The chain is Peptide methionine sulfoxide reductase MsrA from Listeria innocua serovar 6a (strain ATCC BAA-680 / CLIP 11262).